Consider the following 395-residue polypeptide: Elongation factor Tu (395 aa).

Positions 10–204 (KPHVNIGTIG…EVDAYIPTPE (195 aa)) constitute a tr-type G domain. The interval 19 to 26 (GHVDHGKT) is G1. 19–26 (GHVDHGKT) serves as a coordination point for GTP. T26 contributes to the Mg(2+) binding site. Residues 60–64 (GITIS) are G2. The tract at residues 81–84 (DCPG) is G3. GTP contacts are provided by residues 81-85 (DCPGH) and 136-139 (NKCD). The G4 stretch occupies residues 136–139 (NKCD). Residues 174–176 (SAL) form a G5 region.

It belongs to the TRAFAC class translation factor GTPase superfamily. Classic translation factor GTPase family. EF-Tu/EF-1A subfamily. As to quaternary structure, monomer.

It localises to the cytoplasm. The enzyme catalyses GTP + H2O = GDP + phosphate + H(+). GTP hydrolase that promotes the GTP-dependent binding of aminoacyl-tRNA to the A-site of ribosomes during protein biosynthesis. This is Elongation factor Tu from Bacillus anthracis (strain A0248).